Consider the following 141-residue polypeptide: uncharacterized protein (141 aa).

The span at 1 to 17 shows a compositional bias: basic and acidic residues; that stretch reads MNKSESENDSEYHKEYS. Positions 1-24 are disordered; that stretch reads MNKSESENDSEYHKEYSESSDPED. Residues 52–115 are a coiled coil; that stretch reads IQNLNNNVKE…QMLFEKMRDM (64 aa).

This is an uncharacterized protein from Acanthamoeba polyphaga (Amoeba).